Reading from the N-terminus, the 586-residue chain is Ezrin (586 aa).

Residues 2 to 295 (PKPINVRVTT…GNHELYMRRR (294 aa)) enclose the FERM domain. Lys-60 carries the post-translational modification N6-acetyllysine. Residues 115-120 (IYCPPE) carry the [IL]-x-C-x-x-[DE] motif motif. Tyr-146 bears the Phosphotyrosine; by PDGFR mark. The segment at 244 to 586 (EIRNISFNDK…KQRIDEFEAM (343 aa)) is interaction with SCYL3. Residues 302 to 462 (VQQMKAQARE…QDDLVKTKEE (161 aa)) adopt a coiled-coil conformation. Positions 305–340 (MKAQAREEKHQKQLERQQLESEKKRREAVEQEKEQM) are disordered. A compositionally biased stretch (basic and acidic residues) spans 308–340 (QAREEKHQKQLERQQLESEKKRREAVEQEKEQM). Residue Tyr-354 is modified to Phosphotyrosine; by PDGFR. Ser-366 carries the post-translational modification Phosphoserine. The residue at position 478 (Tyr-478) is a Phosphotyrosine. The residue at position 535 (Ser-535) is a Phosphoserine. At Thr-567 the chain carries Phosphothreonine; by ROCK2 and PKC/PRKCI.

In terms of assembly, interacts with PALS1. Found in a complex with EZR, PODXL and NHERF2. Interacts with MCC, PLEKHG6, PODXL, SCYL3/PACE1, NHERF1, NHERF2 and TMEM8B. Interacts (when phosphorylated) with FES/FPS. Interacts with dimeric S100P, the interaction may be activating through unmasking of F-actin binding sites. Identified in complexes that contain VIM, EZR, AHNAK, BFSP1, BFSP2, ANK2, PLEC, PRX and spectrin. Detected in a complex composed of at least EZR, AHNAK, PPL and PRX. Interacts with PDPN (via cytoplasmic domain); activates RHOA and promotes epithelial-mesenchymal transition. Interacts with SPN/CD43 cytoplasmic tail, CD44 and ICAM2. Interacts with SLC9A3; interaction targets SLC9A3 to the apical membrane. Interacts with SLC9A1; regulates interactions of SLC9A1 with cytoskeletal and promotes stress fiber formation. Interacts with CLIC5; may work together in a complex which also includes RDX and MYO6 to stabilize linkages between the plasma membrane and subjacent actin cytoskeleton at the base of stereocilia. Phosphorylated by tyrosine-protein kinases. Phosphorylation by ROCK2 suppresses the head-to-tail association of the N-terminal and C-terminal halves resulting in an opened conformation which is capable of actin and membrane-binding. Post-translationally, S-nitrosylation is induced by interferon-gamma and oxidatively-modified low-densitity lipoprotein (LDL(ox)) possibly implicating the iNOS-S100A8/9 transnitrosylase complex.

Its subcellular location is the apical cell membrane. It is found in the cell projection. The protein resides in the microvillus membrane. It localises to the ruffle membrane. The protein localises to the cytoplasm. Its subcellular location is the cell cortex. It is found in the cytoskeleton. The protein resides in the microvillus. A head-to-tail association, of the N-terminal and C-terminal halves results in a closed conformation (inactive form) which is incapable of actin or membrane-binding. Functionally, probably involved in connections of major cytoskeletal structures to the plasma membrane. In epithelial cells, required for the formation of microvilli and membrane ruffles on the apical pole. Along with PLEKHG6, required for normal macropinocytosis. The polypeptide is Ezrin (EZR) (Oryctolagus cuniculus (Rabbit)).